A 436-amino-acid chain; its full sequence is Histidinol dehydrogenase (436 aa).

Tyr-130, Gln-191, and Asn-214 together coordinate NAD(+). Ser-237, Gln-259, and His-262 together coordinate substrate. Zn(2+) is bound by residues Gln-259 and His-262. Catalysis depends on proton acceptor residues Glu-327 and His-328. Substrate contacts are provided by His-328, Asp-361, Glu-415, and His-420. A Zn(2+)-binding site is contributed by Asp-361. His-420 is a binding site for Zn(2+).

It belongs to the histidinol dehydrogenase family. Zn(2+) serves as cofactor.

The catalysed reaction is L-histidinol + 2 NAD(+) + H2O = L-histidine + 2 NADH + 3 H(+). The protein operates within amino-acid biosynthesis; L-histidine biosynthesis; L-histidine from 5-phospho-alpha-D-ribose 1-diphosphate: step 9/9. In terms of biological role, catalyzes the sequential NAD-dependent oxidations of L-histidinol to L-histidinaldehyde and then to L-histidine. In Geobacter metallireducens (strain ATCC 53774 / DSM 7210 / GS-15), this protein is Histidinol dehydrogenase.